The chain runs to 67 residues: Non-specific lipid-transfer protein 2 (67 aa).

Disulfide bonds link Cys3-Cys35, Cys11-Cys25, Cys26-Cys61, and Cys37-Cys67.

Belongs to the plant LTP family. In terms of assembly, monomer. Post-translationally, disulfide bonds.

Its function is as follows. Plant non-specific lipid-transfer proteins transfer phospholipids as well as galactolipids across membranes. May play a role in wax or cutin deposition in the cell walls of expanding epidermal cells and certain secretory tissues. The sequence is that of Non-specific lipid-transfer protein 2 from Apium graveolens var. rapaceum (Celeriac).